Reading from the N-terminus, the 317-residue chain is Type II restriction enzyme NaeI (317 aa).

In terms of assembly, homodimer.

The enzyme catalyses Endonucleolytic cleavage of DNA to give specific double-stranded fragments with terminal 5'-phosphates.. An E and P subtype restriction enzyme that recognizes the double-stranded unmethylated sequence 5'-GCCGGC-3' and cleaves after C-3. The sequence is that of Type II restriction enzyme NaeI from Lentzea aerocolonigenes (Lechevalieria aerocolonigenes).